Reading from the N-terminus, the 118-residue chain is Small ribosomal subunit protein uS13 (118 aa).

The tract at residues 91–118 is disordered; the sequence is HRRGLPVRGQRTKTNARTRKGPRKPIKK.

Belongs to the universal ribosomal protein uS13 family. Part of the 30S ribosomal subunit. Forms a loose heterodimer with protein S19. Forms two bridges to the 50S subunit in the 70S ribosome.

Functionally, located at the top of the head of the 30S subunit, it contacts several helices of the 16S rRNA. In the 70S ribosome it contacts the 23S rRNA (bridge B1a) and protein L5 of the 50S subunit (bridge B1b), connecting the 2 subunits; these bridges are implicated in subunit movement. Contacts the tRNAs in the A and P-sites. The sequence is that of Small ribosomal subunit protein uS13 from Serratia proteamaculans (strain 568).